Consider the following 285-residue polypeptide: CCR4-NOT transcription complex subunit 7 (285 aa).

The a divalent metal cation site is built by D40, E42, D161, D230, and E278.

Belongs to the CAF1 family. As to quaternary structure, component of the CCR4-NOT complex. The cofactor is Mn(2+). It depends on Mg(2+) as a cofactor. Co(2+) serves as cofactor.

The protein localises to the nucleus. It localises to the cytoplasm. It catalyses the reaction Exonucleolytic cleavage of poly(A) to 5'-AMP.. Has 3'-5' poly(A) exoribonuclease activity for synthetic poly(A) RNA substrate. Catalytic component of the CCR4-NOT complex which is one of the major cellular mRNA deadenylases and is linked to various cellular processes including bulk mRNA degradation, miRNA-mediated repression, translational repression during translational initiation and general transcription regulation. During miRNA-mediated repression the complex also seems to act as translational repressor during translational initiation. Additional complex functions may be a consequence of its influence on mRNA expression. In Xenopus laevis (African clawed frog), this protein is CCR4-NOT transcription complex subunit 7 (cnot7).